The following is a 475-amino-acid chain: Aspartyl/glutamyl-tRNA(Asn/Gln) amidotransferase subunit B (475 aa).

It belongs to the GatB/GatE family. GatB subfamily. Heterotrimer of A, B and C subunits.

The enzyme catalyses L-glutamyl-tRNA(Gln) + L-glutamine + ATP + H2O = L-glutaminyl-tRNA(Gln) + L-glutamate + ADP + phosphate + H(+). It catalyses the reaction L-aspartyl-tRNA(Asn) + L-glutamine + ATP + H2O = L-asparaginyl-tRNA(Asn) + L-glutamate + ADP + phosphate + 2 H(+). Functionally, allows the formation of correctly charged Asn-tRNA(Asn) or Gln-tRNA(Gln) through the transamidation of misacylated Asp-tRNA(Asn) or Glu-tRNA(Gln) in organisms which lack either or both of asparaginyl-tRNA or glutaminyl-tRNA synthetases. The reaction takes place in the presence of glutamine and ATP through an activated phospho-Asp-tRNA(Asn) or phospho-Glu-tRNA(Gln). The polypeptide is Aspartyl/glutamyl-tRNA(Asn/Gln) amidotransferase subunit B (Chlorobium chlorochromatii (strain CaD3)).